We begin with the raw amino-acid sequence, 495 residues long: Inner membrane ALBINO3-like protein 1, chloroplastic (495 aa).

A helical transmembrane segment spans residues 76-96 (LGAIYVLADASASTAAAAVMP). The Stromal portion of the chain corresponds to 97–206 (TAVDSAAGAA…VLYEQAGVNP (110 aa)). Residues 207 to 227 (LAGCLPTLATIPIFIGLFSSL) form a helical membrane-spanning segment. The Lumenal portion of the chain corresponds to 228–273 (TNVANDGLLDTQGFYFVPSLAGPTTMAMRQSGLGTSWLWPLGPDGA). A helical membrane pass occupies residues 274 to 294 (PPIGWEDAAAYLTLPLLLVAV). Residues 295–317 (QYASSSVTSPPIDPKDENANTQR) are Stromal-facing. Residues 318-338 (ALLVFLPLMVGWFSLNVPAGL) form a helical membrane-spanning segment. At 339–441 (SLYYLANTVL…ASVSLSVDDS (103 aa)) the chain is on the lumenal side. Residues 442-462 (TAAIAGTATMAVTAGAPAAAM) traverse the membrane as a helical segment. The Stromal segment spans residues 463-495 (DPSKVNRRCKRRRLTSLVQDGSTASAAVAGASA).

It belongs to the OXA1/ALB3/YidC (TC 2.A.9.2) family. Associates with the LHCII complex and with the psaE subunit of the LHCI complex.

Its subcellular location is the plastid. The protein localises to the chloroplast thylakoid membrane. Functionally, required for the insertion of some light-harvesting complexes (LHC) proteins into the chloroplast thylakoid membrane. Essential for the assembly and activity of LHC I and II. Its function is probably partly distinct from that of ALB3.2. The chain is Inner membrane ALBINO3-like protein 1, chloroplastic (ALB3.1) from Chlamydomonas reinhardtii (Chlamydomonas smithii).